A 446-amino-acid polypeptide reads, in one-letter code: WEB family protein At3g56270 (446 aa).

The stretch at 313–349 (TNVSRIEILRKLEEANEEVKQSKQALEVALNRVEIAS) forms a coiled coil.

It belongs to the WEB family.

This Arabidopsis thaliana (Mouse-ear cress) protein is WEB family protein At3g56270.